We begin with the raw amino-acid sequence, 391 residues long: Aspartate carbamoyltransferase 3, chloroplastic (391 aa).

The transit peptide at 1–69 (MTASSSLFSC…SKCDKMIKTR (69 aa)) directs the protein to the chloroplast. Residues Arg137 and Thr138 each coordinate carbamoyl phosphate. The UMP site is built by Arg137 and Thr138. Lys167 provides a ligand contact to L-aspartate. 3 residues coordinate carbamoyl phosphate: Arg188, His216, and Gln219. 2 residues coordinate UMP: Arg188 and His216. The UMP site is built by Arg249 and Arg311. The L-aspartate site is built by Arg249 and Arg311. Carbamoyl phosphate contacts are provided by Leu351 and Pro352.

This sequence belongs to the aspartate/ornithine carbamoyltransferase superfamily. ATCase family. As to quaternary structure, homotrimer.

The protein localises to the plastid. The protein resides in the chloroplast. It catalyses the reaction carbamoyl phosphate + L-aspartate = N-carbamoyl-L-aspartate + phosphate + H(+). It participates in pyrimidine metabolism; UMP biosynthesis via de novo pathway; (S)-dihydroorotate from bicarbonate: step 2/3. With respect to regulation, feedback inhibited by UMP. Catalyzes the condensation of carbamoyl phosphate and aspartate to form carbamoyl aspartate and inorganic phosphate, the committed step in the de novo pyrimidine nucleotide biosynthesis pathway. This is Aspartate carbamoyltransferase 3, chloroplastic (PYRB3) from Pisum sativum (Garden pea).